The primary structure comprises 408 residues: Phosphopentomutase (408 aa).

Residues Asp10, Asp303, His308, Asp344, His345, and His356 each coordinate Mn(2+).

This sequence belongs to the phosphopentomutase family. Mn(2+) serves as cofactor.

Its subcellular location is the cytoplasm. The enzyme catalyses 2-deoxy-alpha-D-ribose 1-phosphate = 2-deoxy-D-ribose 5-phosphate. It catalyses the reaction alpha-D-ribose 1-phosphate = D-ribose 5-phosphate. It participates in carbohydrate degradation; 2-deoxy-D-ribose 1-phosphate degradation; D-glyceraldehyde 3-phosphate and acetaldehyde from 2-deoxy-alpha-D-ribose 1-phosphate: step 1/2. Functionally, isomerase that catalyzes the conversion of deoxy-ribose 1-phosphate (dRib-1-P) and ribose 1-phosphate (Rib-1-P) to deoxy-ribose 5-phosphate (dRib-5-P) and ribose 5-phosphate (Rib-5-P), respectively. This chain is Phosphopentomutase, found in Tolumonas auensis (strain DSM 9187 / NBRC 110442 / TA 4).